Here is a 239-residue protein sequence, read N- to C-terminus: Regulator protein TubY (239 aa).

Positions 138 to 239 (INNTISQQLS…KGFFGKLFKR (102 aa)) are required to bind TubZ. The stretch at 150–229 (LNAHNEALEQ…KQQNEEQNNK (80 aa)) forms a coiled coil. Residues 217 to 228 (EERKQQNEEQNN) are compositionally biased toward basic and acidic residues. Residues 217-239 (EERKQQNEEQNNKKGFFGKLFKR) form a disordered region. A compositionally biased stretch (low complexity) spans 229–239 (KKGFFGKLFKR).

As to quaternary structure, forms homooctamers in the absence of the last 13 residues; the coiled coil domain is required for oligomerization. In the presence of GTP and Mg(2+) binds to TubZ and also to TubZ-TubR-tubC DNA; the latter is reshaped from large filament bundles to rings of 30-40 nm diameter.

Its subcellular location is the host cytoplasm. Functionally, a probable TubZ filament regulator that is part of the type III partition system presumably used to ensure correct segregation of this bacteriophage. Binds to TubZ in the presence of GTP and Mg(2+), and to TubZ-TubR-tubC (tubC is the centromere-like site). The latter complex is reshaped from large bundles to rings by TubY. Modifies TubZ filaments formed in the presence of GDP to make them thinner and more flexible; in GDP and lacking the last 8 residues of TubZ makes rings without TubT-tubC. This is Regulator protein TubY from Clostridium botulinum C (Clostridium botulinum C bacteriophage).